A 172-amino-acid polypeptide reads, in one-letter code: MLLLCHILAVTILQILIISENWVFAKNINFYNVRPPLDPTPFPNSFKCFTCENAGDNYNCNRWAEDKWCPQDTQYCLTVHHFTSHGRSTSITKKCASKNECHFVGCRHSRDSEHTECRSCCEGMICNVELPTNHTNAVFAVMHAQRTSGSSVSSVPSPYLLVLAWLFMLPLL.

Positions 1 to 25 (MLLLCHILAVTILQILIISENWVFA) are cleaved as a signal peptide. The region spanning 46–137 (FKCFTCENAG…VELPTNHTNA (92 aa)) is the UPAR/Ly6 domain. The segment at 46-140 (FKCFTCENAG…PTNHTNAVFA (95 aa)) is sufficient for inhibiting alpha-7 nAChR currents. Intrachain disulfides connect cysteine 48–cysteine 76, cysteine 51–cysteine 60, cysteine 69–cysteine 95, cysteine 101–cysteine 120, cysteine 106–cysteine 117, and cysteine 121–cysteine 126. Serine 148 is lipidated: GPI-anchor amidated serine. Positions 149–172 (GSSVSSVPSPYLLVLAWLFMLPLL) are cleaved as a propeptide — removed in mature form.

Its subcellular location is the cell membrane. Likely acts as a modulator of nicotinic acetylcholine receptors (nAChRs) activity. In vitro acts on nAChRs in a subtype- and stoichiometry-dependent manner. Modulates specifically alpha-3(3):beta-4(2) nAChRs by enhancing the sensitivity to ACh, decreasing ACh-induced maximal current response and increasing the rate of desensitization to ACh; has no effect on alpha-7 homomeric nAChRs; modulates alpha-3(2):alpha-5:beta-4(2) nAChRs in the context of CHRNA5/alpha-5 variant Asn-398 but not its wild-type sequence. However, according to another report in vitro it can weakly inhibits alpha-7 nAChRs. The sequence is that of Ly6/PLAUR domain-containing protein 6B (Lypd6b) from Mus musculus (Mouse).